Reading from the N-terminus, the 205-residue chain is CD83 antigen (205 aa).

Positions 1–19 (MSRGLQLLLLSCAYSLAPA) are cleaved as a signal peptide. Positions 20-114 (TPEVKVACSE…YRCTLQDPDG (95 aa)) constitute an Ig-like V-type domain. Residues 20 to 144 (TPEVKVACSE…EETFKKYRAE (125 aa)) are Extracellular-facing. A disulfide bond links Cys35 and Cys107. Basic and acidic residues predominate over residues 60 to 69 (METPQEDHLR). A disordered region spans residues 60–81 (METPQEDHLRGQHYHQKGQNGS). Asn79, Asn96, and Asn117 each carry an N-linked (GlcNAc...) asparagine glycan. The chain crosses the membrane as a helical span at residues 145–166 (IVLLLALVIFYLTLIIFTCKFA). Topologically, residues 167–205 (RLQSIFPDFSKAGMERAFLPVTSPNKHLGLVTPHKTELV) are cytoplasmic.

As to quaternary structure, monomer. Homodimer. Homotrimer. Interacts with MARCHF1; this interaction antagonizes MARCHF1-mediated MHC II and CD86 down-regulation. In terms of processing, glycosylated when expressed on activated dendritic cells. As to expression, expressed by activated lymphocytes, Langerhans cells and activatd dendritic cells.

It is found in the membrane. In terms of biological role, transmembrane glycoprotein predominantly found on the surface of many immune cells including dendritic cells or lymphocytes that plays various roles in immune response regulation. Plays an essential role in CD4(+) T-selection, differentiation and stability by regulating the activity of the major E3 ubiquitin ligase responsible for controlling MHCII trafficking MARCHF8. Also inhibits MARCHF1 association with MHCII or CD86 to prevent their ubiquitination and subsequent degradation. In addition, acts as an important modulator of protective responses against acute infections. In Homo sapiens (Human), this protein is CD83 antigen (CD83).